A 128-amino-acid chain; its full sequence is Arginine decarboxylase proenzyme (128 aa).

Serine 76 (schiff-base intermediate with substrate; via pyruvic acid) is an active-site residue. Residue serine 76 is modified to Pyruvic acid (Ser); by autocatalysis. Residue histidine 81 is the Proton acceptor; for processing activity of the active site. Cysteine 96 serves as the catalytic Proton donor; for catalytic activity.

Belongs to the prokaryotic AdoMetDC family. Type 1 subfamily. Heterooctamer of four alpha and four beta chains arranged as a tetramer of alpha/beta heterodimers. Pyruvate serves as cofactor. Is synthesized initially as an inactive proenzyme. Formation of the active enzyme involves a self-maturation process in which the active site pyruvoyl group is generated from an internal serine residue via an autocatalytic post-translational modification. Two non-identical subunits are generated from the proenzyme in this reaction, and the pyruvate is formed at the N-terminus of the alpha chain, which is derived from the carboxyl end of the proenzyme. The post-translation cleavage follows an unusual pathway, termed non-hydrolytic serinolysis, in which the side chain hydroxyl group of the serine supplies its oxygen atom to form the C-terminus of the beta chain, while the remainder of the serine residue undergoes an oxidative deamination to produce ammonia and the pyruvoyl group blocking the N-terminus of the alpha chain.

The enzyme catalyses L-arginine + H(+) = agmatine + CO2. The protein operates within amine and polyamine biosynthesis; agmatine biosynthesis; agmatine from L-arginine: step 1/1. In terms of biological role, specifically catalyzes the decarboxylation of L-arginine to agmatine. Has no S-adenosylmethionine decarboxylase (AdoMetDC) activity. The sequence is that of Arginine decarboxylase proenzyme from Sulfurisphaera tokodaii (strain DSM 16993 / JCM 10545 / NBRC 100140 / 7) (Sulfolobus tokodaii).